Here is a 299-residue protein sequence, read N- to C-terminus: ATP phosphoribosyltransferase (299 aa).

Belongs to the ATP phosphoribosyltransferase family. Long subfamily. It depends on Mg(2+) as a cofactor.

It is found in the cytoplasm. It carries out the reaction 1-(5-phospho-beta-D-ribosyl)-ATP + diphosphate = 5-phospho-alpha-D-ribose 1-diphosphate + ATP. Its pathway is amino-acid biosynthesis; L-histidine biosynthesis; L-histidine from 5-phospho-alpha-D-ribose 1-diphosphate: step 1/9. With respect to regulation, feedback inhibited by histidine. Its function is as follows. Catalyzes the condensation of ATP and 5-phosphoribose 1-diphosphate to form N'-(5'-phosphoribosyl)-ATP (PR-ATP). Has a crucial role in the pathway because the rate of histidine biosynthesis seems to be controlled primarily by regulation of HisG enzymatic activity. The chain is ATP phosphoribosyltransferase from Shewanella sp. (strain ANA-3).